A 199-amino-acid polypeptide reads, in one-letter code: CASP-like protein 2B1 (199 aa).

Residues 1 to 26 (MSYLGVGLSPVNVAGTKMKLMDRKVR) lie on the Cytoplasmic side of the membrane. A helical membrane pass occupies residues 27-47 (LTELILRCSVCALALVAAILI). Topologically, residues 48–69 (ATDTQVKEIFTIQKKAKYTDMK) are extracellular. A helical membrane pass occupies residues 70–90 (ALVFLVVVNGIAAAYSLLHMV). Residues 91-106 (RCVVGMMKGSVLFSKP) are Cytoplasmic-facing. A helical transmembrane segment spans residues 107-127 (LAWAIFSGDQAIAYLTVAGVA). The Extracellular portion of the chain corresponds to 128-164 (AAAQSAAFAKLGEPELQWMKICTIYGKFCNQVGEGIA). The chain crosses the membrane as a helical span at residues 165-185 (TALLASIGMVLISSISAFALF). Residues 186-199 (RLYGGNKAQQGSRW) lie on the Cytoplasmic side of the membrane.

The protein belongs to the Casparian strip membrane proteins (CASP) family. In terms of assembly, homodimer and heterodimers.

Its subcellular location is the cell membrane. This is CASP-like protein 2B1 from Eutrema halophilum (Salt cress).